A 95-amino-acid chain; its full sequence is Protein TusB (95 aa).

The protein belongs to the DsrH/TusB family. As to quaternary structure, heterohexamer, formed by a dimer of trimers. The hexameric TusBCD complex contains 2 copies each of TusB, TusC and TusD. The TusBCD complex interacts with TusE.

It is found in the cytoplasm. Part of a sulfur-relay system required for 2-thiolation of 5-methylaminomethyl-2-thiouridine (mnm(5)s(2)U) at tRNA wobble positions. This chain is Protein TusB, found in Pectobacterium carotovorum subsp. carotovorum (strain PC1).